A 154-amino-acid chain; its full sequence is Probable chemoreceptor glutamine deamidase CheD (154 aa).

This sequence belongs to the CheD family.

The catalysed reaction is L-glutaminyl-[protein] + H2O = L-glutamyl-[protein] + NH4(+). In terms of biological role, probably deamidates glutamine residues to glutamate on methyl-accepting chemotaxis receptors (MCPs), playing an important role in chemotaxis. This is Probable chemoreceptor glutamine deamidase CheD from Methanococcus maripaludis (strain C6 / ATCC BAA-1332).